Reading from the N-terminus, the 867-residue chain is MEGLARVFLIGGASKAVRYDEQTTIERVIHVVARGIGISQVAVAHFALRLVTGPSPQTAGSGDSLWLHPMLRITQLPHIYARHLPIGVCDEIKLEMRMRFMPQSVYELQATDSSAFVYLHEQVVDEFFSHVAWRSSVEVALEVAALKVCRDFAEHQHNKGADHHLEDLDIEACIQSLIPNVLHNPGFKHSHLKKTFTAYIKKFSATSPNESIIRSLALLLEVVKFDVELFKASLGAGWTKPVELVVGPHTGLSYRLNERCDSSRLLELRTIAEITIRKMENGSEKTLMQLNLSGAAKPVLITLSTEELSQSLAHLLDGYQMLYNQRDSVFKLKGIERCETLTMHEATIRPKTPNNIDSNIRLRRELITLKELIGGGQFGNVYKAVYHDLEKDERIAVAVKVCKTDAEPADTQLILQESSLMRNFRHSNIIQLIGVCVDQPMWLVLELAPKGELREYLQQEKDWLPLRILTLFCSQICDSLVYLHSTRFVHRDIAARNILVCSPQCVKLADFGLSRALDYDAVYTASRGKLPIKWLAPESVNYRQFSMASDVWMFGVCMWEIFSLGVKPWAGVTNSDVIMHIEQGSRPPCPEKCPTALYNFIRSKMWAIEPHKRPTVDQIYAIIEDVRQQIIQNIPPEQIIVGKPMTAAGVIVAEMSSLPGLTLYRTMEDQKRQAEEDAKWLEQEDDEDEDDQDIDQIPSTSHSSVENIRTSNGYLHHTPTSTRSLRFEDKTSRGLRRSVDGVCDAVTKLQNSFNNLTHNDDFLHSVKEVTSQLREMLIVASGMRDRVTTTTQRTDVDMTKTLIANDMKQMSRVMGKLQVNGHQATYNTLRRDVVRICGELAVNCTTLQLQLTQPPLENEFSSLLSNC.

The FERM domain maps to 3–327 (GLARVFLIGG…GYQMLYNQRD (325 aa)). The Protein kinase domain maps to 367-631 (ITLKELIGGG…IIEDVRQQII (265 aa)). ATP is bound by residues 373–381 (IGGGQFGNV) and Lys-400. A coiled-coil region spans residues 662-691 (TLYRTMEDQKRQAEEDAKWLEQEDDEDEDD). Positions 674 to 729 (AEEDAKWLEQEDDEDEDDQDIDQIPSTSHSSVENIRTSNGYLHHTPTSTRSLRFED) are disordered. Positions 683–694 (QEDDEDEDDQDI) are enriched in acidic residues. The segment covering 698–724 (PSTSHSSVENIRTSNGYLHHTPTSTRS) has biased composition (polar residues).

Belongs to the protein kinase superfamily. Tyr protein kinase family. FAK subfamily. In terms of tissue distribution, expressed in body wall muscles and some neurons in the head.

Functionally, has apparently no tyrosine kinase activity in vitro when expressed in mammalian cells. The chain is Inactive tyrosine-protein kinase kin-32 from Caenorhabditis elegans.